Here is a 219-residue protein sequence, read N- to C-terminus: Thymidylate kinase (219 aa).

ATP is bound at residue 7–14 (GIDGAGKS).

This sequence belongs to the thymidylate kinase family.

It catalyses the reaction dTMP + ATP = dTDP + ADP. Functionally, phosphorylation of dTMP to form dTDP in both de novo and salvage pathways of dTTP synthesis. This chain is Thymidylate kinase, found in Chlorobium limicola (strain DSM 245 / NBRC 103803 / 6330).